We begin with the raw amino-acid sequence, 151 residues long: Ribosome maturation factor RimP (151 aa).

This sequence belongs to the RimP family.

The protein localises to the cytoplasm. Functionally, required for maturation of 30S ribosomal subunits. The polypeptide is Ribosome maturation factor RimP (Colwellia psychrerythraea (strain 34H / ATCC BAA-681) (Vibrio psychroerythus)).